A 421-amino-acid chain; its full sequence is N-succinylarginine dihydrolase (421 aa).

Substrate contacts are provided by residues 19-28 (AGLSLGNLAS), asparagine 105, and 132-133 (HR). Glutamate 167 is an active-site residue. Arginine 199 contributes to the substrate binding site. Histidine 235 is an active-site residue. Aspartate 237 and asparagine 346 together coordinate substrate. Cysteine 352 functions as the Nucleophile in the catalytic mechanism.

This sequence belongs to the succinylarginine dihydrolase family. As to quaternary structure, homodimer.

It carries out the reaction N(2)-succinyl-L-arginine + 2 H2O + 2 H(+) = N(2)-succinyl-L-ornithine + 2 NH4(+) + CO2. The protein operates within amino-acid degradation; L-arginine degradation via AST pathway; L-glutamate and succinate from L-arginine: step 2/5. Functionally, catalyzes the hydrolysis of N(2)-succinylarginine into N(2)-succinylornithine, ammonia and CO(2). In Novosphingobium aromaticivorans (strain ATCC 700278 / DSM 12444 / CCUG 56034 / CIP 105152 / NBRC 16084 / F199), this protein is N-succinylarginine dihydrolase.